The sequence spans 537 residues: Exodeoxyribonuclease 7 large subunit (537 aa).

A disordered region spans residues 508–537 (GEGAPVEPPQAARPSKGARTKAAQPSLFDD).

Belongs to the XseA family. In terms of assembly, heterooligomer composed of large and small subunits.

The protein resides in the cytoplasm. The enzyme catalyses Exonucleolytic cleavage in either 5'- to 3'- or 3'- to 5'-direction to yield nucleoside 5'-phosphates.. In terms of biological role, bidirectionally degrades single-stranded DNA into large acid-insoluble oligonucleotides, which are then degraded further into small acid-soluble oligonucleotides. The sequence is that of Exodeoxyribonuclease 7 large subunit from Azorhizobium caulinodans (strain ATCC 43989 / DSM 5975 / JCM 20966 / LMG 6465 / NBRC 14845 / NCIMB 13405 / ORS 571).